The primary structure comprises 727 residues: Pre-B-cell leukemia transcription factor-interacting protein 1 (727 aa).

Residues 1 to 10 are compositionally biased toward polar residues; it reads MASCPDSDNS. The interval 1–135 is disordered; the sequence is MASCPDSDNS…SPHRSLPSSP (135 aa). Positions 39 to 53 are enriched in low complexity; it reads RAPQSPSRAAAEESA. Ser-43 carries the post-translational modification Phosphoserine. Residues 61-70 show a composition bias toward polar residues; sequence TVSQNESSKS. 5 positions are modified to phosphoserine: Ser-130, Ser-134, Ser-147, Ser-148, and Ser-149. Thr-153 carries the post-translational modification Phosphothreonine. Coiled-coil stretches lie at residues 269–353 and 380–421; these read QNMA…QGAD and SPGF…SLKE. Residues 488 to 506 carry the Nuclear localization signal motif; it reads WKTEHWKHKKEASGREKSW. 2 disordered regions span residues 491–568 and 701–727; these read EHWK…AKDR and KRSG…HRQG. Composition is skewed to basic and acidic residues over residues 498–544, 551–568, and 716–727; these read EASG…EPPR, PSGE…AKDR, and GPREEHSPHRQG. A Nuclear localization signal motif is present at residues 696 to 719; it reads DKALKKRSGKKDKHLQNRVVGPRE.

In terms of assembly, interacts with ESR1, PBX1, PBX2 and PBX3. Interacts with TEX11.

The protein localises to the cytoplasm. It is found in the cytoskeleton. It localises to the nucleus. Functionally, regulator of pre-B-cell leukemia transcription factors (BPXs) function. Inhibits the binding of PBX1-HOX complex to DNA and blocks the transcriptional activity of E2A-PBX1. Tethers estrogen receptor-alpha (ESR1) to microtubules and allows them to influence estrogen receptors-alpha signaling. The chain is Pre-B-cell leukemia transcription factor-interacting protein 1 (PBXIP1) from Bos taurus (Bovine).